The primary structure comprises 352 residues: tRNA N6-adenosine threonylcarbamoyltransferase (352 aa).

Residues H115 and H119 each contribute to the Fe cation site. Residues 138 to 142 (LVSGG), D171, G184, and N276 contribute to the substrate site. Residue D304 coordinates Fe cation.

It belongs to the KAE1 / TsaD family. Requires Fe(2+) as cofactor.

The protein localises to the cytoplasm. It carries out the reaction L-threonylcarbamoyladenylate + adenosine(37) in tRNA = N(6)-L-threonylcarbamoyladenosine(37) in tRNA + AMP + H(+). In terms of biological role, required for the formation of a threonylcarbamoyl group on adenosine at position 37 (t(6)A37) in tRNAs that read codons beginning with adenine. Is involved in the transfer of the threonylcarbamoyl moiety of threonylcarbamoyl-AMP (TC-AMP) to the N6 group of A37, together with TsaE and TsaB. TsaD likely plays a direct catalytic role in this reaction. The sequence is that of tRNA N6-adenosine threonylcarbamoyltransferase from Xanthomonas axonopodis pv. citri (strain 306).